A 255-amino-acid chain; its full sequence is Zinc import ATP-binding protein ZnuC (255 aa).

Residues 4-219 (VDVDGLSLRY…PEYRALFGTG (216 aa)) enclose the ABC transporter domain. Residue 36 to 43 (GPNGSGKT) participates in ATP binding. The disordered stretch occupies residues 234 to 255 (EHDHHDGCAHGQATEDRTEAAE).

Belongs to the ABC transporter superfamily. Zinc importer (TC 3.A.1.15.5) family. As to quaternary structure, the complex is composed of two ATP-binding proteins (ZnuC), two transmembrane proteins (ZnuB) and a solute-binding protein (ZnuA).

It is found in the cell inner membrane. It carries out the reaction Zn(2+)(out) + ATP(in) + H2O(in) = Zn(2+)(in) + ADP(in) + phosphate(in) + H(+)(in). Functionally, part of the ABC transporter complex ZnuABC involved in zinc import. Responsible for energy coupling to the transport system. This Roseobacter denitrificans (strain ATCC 33942 / OCh 114) (Erythrobacter sp. (strain OCh 114)) protein is Zinc import ATP-binding protein ZnuC.